We begin with the raw amino-acid sequence, 739 residues long: Phosphoribosylformylglycinamidine synthase subunit PurL (739 aa).

Residue H53 is part of the active site. Residues Y56 and K95 each coordinate ATP. E97 provides a ligand contact to Mg(2+). Substrate-binding positions include 98-101 and R120; that span reads SHNH. H99 (proton acceptor) is an active-site residue. Residue D121 coordinates Mg(2+). Q244 provides a ligand contact to substrate. A Mg(2+)-binding site is contributed by D274. 318–320 contacts substrate; it reads ESQ. ATP contacts are provided by D501 and G538. Residue N539 participates in Mg(2+) binding. A substrate-binding site is contributed by S541.

It belongs to the FGAMS family. In terms of assembly, monomer. Part of the FGAM synthase complex composed of 1 PurL, 1 PurQ and 2 PurS subunits.

It localises to the cytoplasm. It catalyses the reaction N(2)-formyl-N(1)-(5-phospho-beta-D-ribosyl)glycinamide + L-glutamine + ATP + H2O = 2-formamido-N(1)-(5-O-phospho-beta-D-ribosyl)acetamidine + L-glutamate + ADP + phosphate + H(+). It participates in purine metabolism; IMP biosynthesis via de novo pathway; 5-amino-1-(5-phospho-D-ribosyl)imidazole from N(2)-formyl-N(1)-(5-phospho-D-ribosyl)glycinamide: step 1/2. In terms of biological role, part of the phosphoribosylformylglycinamidine synthase complex involved in the purines biosynthetic pathway. Catalyzes the ATP-dependent conversion of formylglycinamide ribonucleotide (FGAR) and glutamine to yield formylglycinamidine ribonucleotide (FGAM) and glutamate. The FGAM synthase complex is composed of three subunits. PurQ produces an ammonia molecule by converting glutamine to glutamate. PurL transfers the ammonia molecule to FGAR to form FGAM in an ATP-dependent manner. PurS interacts with PurQ and PurL and is thought to assist in the transfer of the ammonia molecule from PurQ to PurL. The chain is Phosphoribosylformylglycinamidine synthase subunit PurL from Listeria monocytogenes serotype 4b (strain CLIP80459).